A 187-amino-acid chain; its full sequence is Orotate phosphoribosyltransferase (187 aa).

Residues Arg98, Lys99, Lys102, His104, and Glu128–Ser136 contribute to the 5-phospho-alpha-D-ribose 1-diphosphate site. 2 residues coordinate orotate: Thr132 and Arg160.

This sequence belongs to the purine/pyrimidine phosphoribosyltransferase family. PyrE subfamily. In terms of assembly, homodimer. Mg(2+) serves as cofactor.

The enzyme catalyses orotidine 5'-phosphate + diphosphate = orotate + 5-phospho-alpha-D-ribose 1-diphosphate. The protein operates within pyrimidine metabolism; UMP biosynthesis via de novo pathway; UMP from orotate: step 1/2. In terms of biological role, catalyzes the transfer of a ribosyl phosphate group from 5-phosphoribose 1-diphosphate to orotate, leading to the formation of orotidine monophosphate (OMP). This Rhodopseudomonas palustris (strain BisB18) protein is Orotate phosphoribosyltransferase.